The sequence spans 356 residues: Chaperone protein DnaJ (356 aa).

In terms of domain architecture, J spans 5 to 69; it reads DYYQILGVSK…ERRKEYDRIL (65 aa). The CR-type zinc-finger motif lies at 121–197; it reads GCEKDIEYER…CSGRGRVAMH (77 aa). Residues Cys-134, Cys-137, Cys-151, Cys-154, Cys-171, Cys-174, Cys-185, and Cys-188 each coordinate Zn(2+). CXXCXGXG motif repeat units follow at residues 134–141, 151–158, 171–178, and 185–192; these read CPTCEGKG, CHACEGTG, CSVCKGRG, and CPACSGRG.

Belongs to the DnaJ family. Homodimer. Zn(2+) is required as a cofactor.

The protein localises to the cytoplasm. In terms of biological role, participates actively in the response to hyperosmotic and heat shock by preventing the aggregation of stress-denatured proteins and by disaggregating proteins, also in an autonomous, DnaK-independent fashion. Unfolded proteins bind initially to DnaJ; upon interaction with the DnaJ-bound protein, DnaK hydrolyzes its bound ATP, resulting in the formation of a stable complex. GrpE releases ADP from DnaK; ATP binding to DnaK triggers the release of the substrate protein, thus completing the reaction cycle. Several rounds of ATP-dependent interactions between DnaJ, DnaK and GrpE are required for fully efficient folding. Also involved, together with DnaK and GrpE, in the DNA replication of plasmids through activation of initiation proteins. This chain is Chaperone protein DnaJ, found in Hydrogenobacter thermophilus (strain DSM 6534 / IAM 12695 / TK-6).